Here is an 807-residue protein sequence, read N- to C-terminus: Probable E3 ubiquitin-protein ligase mug30 (807 aa).

The region spanning 453 to 807 is the HECT domain; it reads RNKDFRKALK…LLETNGFNIR (355 aa). Cys-775 serves as the catalytic Glycyl thioester intermediate.

The protein localises to the cytoplasm. It localises to the cytoskeleton. The protein resides in the microtubule organizing center. It is found in the spindle pole body. It catalyses the reaction S-ubiquitinyl-[E2 ubiquitin-conjugating enzyme]-L-cysteine + [acceptor protein]-L-lysine = [E2 ubiquitin-conjugating enzyme]-L-cysteine + N(6)-ubiquitinyl-[acceptor protein]-L-lysine.. It participates in protein modification; protein ubiquitination. In terms of biological role, probable E3 ubiquitin-protein ligase. Has a role in meiosis. In Schizosaccharomyces pombe (strain 972 / ATCC 24843) (Fission yeast), this protein is Probable E3 ubiquitin-protein ligase mug30 (mug30).